The chain runs to 545 residues: Glucose-6-phosphate isomerase (545 aa).

Residue E351 is the Proton donor of the active site. Catalysis depends on residues H382 and K510.

It belongs to the GPI family.

It is found in the cytoplasm. It catalyses the reaction alpha-D-glucose 6-phosphate = beta-D-fructose 6-phosphate. The protein operates within carbohydrate biosynthesis; gluconeogenesis. Its pathway is carbohydrate degradation; glycolysis; D-glyceraldehyde 3-phosphate and glycerone phosphate from D-glucose: step 2/4. In terms of biological role, catalyzes the reversible isomerization of glucose-6-phosphate to fructose-6-phosphate. The protein is Glucose-6-phosphate isomerase of Helicobacter pylori (strain G27).